Consider the following 576-residue polypeptide: Sulfite reductase [NADPH] hemoprotein beta-component (576 aa).

Residues C435, C441, C480, and C484 each coordinate [4Fe-4S] cluster. C484 serves as a coordination point for siroheme.

The protein belongs to the nitrite and sulfite reductase 4Fe-4S domain family. In terms of assembly, alpha(8)-beta(8). The alpha component is a flavoprotein, the beta component is a hemoprotein. The cofactor is siroheme. [4Fe-4S] cluster is required as a cofactor.

It catalyses the reaction hydrogen sulfide + 3 NADP(+) + 3 H2O = sulfite + 3 NADPH + 4 H(+). The protein operates within sulfur metabolism; hydrogen sulfide biosynthesis; hydrogen sulfide from sulfite (NADPH route): step 1/1. Component of the sulfite reductase complex that catalyzes the 6-electron reduction of sulfite to sulfide. This is one of several activities required for the biosynthesis of L-cysteine from sulfate. The polypeptide is Sulfite reductase [NADPH] hemoprotein beta-component (Yersinia pseudotuberculosis serotype O:1b (strain IP 31758)).